The sequence spans 478 residues: Protein MAINTENANCE OF MERISTEMS (478 aa).

A disordered region spans residues Ala-459–Glu-478. A Nuclear localization signal motif is present at residues Lys-464–Arg-468.

As to expression, expressed in root meristem, root vasculature, shoot apical meristem (SAM), leaf vasculature and ovules.

It localises to the nucleus. In terms of biological role, required for the organization of the root apical meristem (RAM) and the shoot apical meristem (SAM). Required to maintain genome stability and cell division activity in meristematic cells. The chain is Protein MAINTENANCE OF MERISTEMS from Arabidopsis thaliana (Mouse-ear cress).